The chain runs to 892 residues: Putative disease resistance protein At4g10780 (892 aa).

Residues S24–K63 are a coiled coil. One can recognise an NB-ARC domain in the interval I137–I440. Position 180–187 (G180–T187) interacts with ATP. LRR repeat units lie at residues A515–P536, E537–H559, K562–L584, A586–K608, T609–S631, and S632–H654.

It belongs to the disease resistance NB-LRR family.

Its function is as follows. Potential disease resistance protein. The sequence is that of Putative disease resistance protein At4g10780 from Arabidopsis thaliana (Mouse-ear cress).